An 863-amino-acid chain; its full sequence is Receptor-like protein Cf-9 (863 aa).

Residues 1–21 form the signal peptide; it reads MDCVKLVFLMLYTFLCQLALS. Residues 22–812 are Extracellular-facing; sequence SSLPHLCPED…EEDSPMISWQ (791 aa). The tract at residues 24-91 is N-cap; that stretch reads LPHLCPEDQA…GVHCDETTGQ (68 aa). N48, N72, N109, N127, N142, N191, N204, and N212 each carry an N-linked (GlcNAc...) asparagine glycan. Residues 92 to 115 form an LRR 1; degenerate repeat; it reads VIALDLRCSQLQGKFHSNSSLFQL. LRR repeat units follow at residues 116-139 and 141-164; these read SNLK…KFGE and SNLT…ICHL. The LRR 4; degenerate repeat unit spans residues 165–191; the sequence is SKLHVLRICDQYGLSLVPYNFELLLKN. 22 LRR repeats span residues 192 to 214, 215 to 238, 241 to 263, 265 to 287, 288 to 312, 314 to 335, 336 to 358, 359 to 382, 383 to 406, 408 to 428, 429 to 452, 454 to 476, 477 to 500, 502 to 524, 525 to 549, 551 to 572, 573 to 597, 599 to 623, 667 to 690, 691 to 714, 715 to 739, and 741 to 759; these read LTQL…SNFS, SHLT…VFHL, LQSL…KWNS, ASLM…SFSH, LTSL…LWNL, NIVF…FTIF, EKLK…LSFN, TQLE…ISGL, QNLE…IFSL, SLVE…EFKS, KTLS…LLNQ, NLQL…ICNL, KTLI…VVER, EYLS…TFSV, GNIL…MINC, YLTL…WLGY, LFQL…GNTN, FMGL…ILGN, LDSN…IIGD, LVGL…SFQN, LSVL…LASL, and FLEV…IPKG. N262 is a glycosylation site (N-linked (GlcNAc...) asparagine). N-linked (GlcNAc...) asparagine glycosylation is found at N300 and N311. 3 N-linked (GlcNAc...) asparagine glycosylation sites follow: N378, N396, and N416. N464 is a glycosylation site (N-linked (GlcNAc...) asparagine). The N-linked (GlcNAc...) asparagine glycan is linked to N519. N-linked (GlcNAc...) asparagine glycosylation is present at N563. N-linked (GlcNAc...) asparagine glycosylation is found at N698 and N714. N-linked (GlcNAc...) asparagine glycans are attached at residues N746 and N767. A C-cap/acidic domain region spans residues 760–812; that stretch reads KQFDSFGNTSYQGNDGLRGFPLSKLCGGEDQVTTPAELDQEEEEEDSPMISWQ. A helical membrane pass occupies residues 813-833; that stretch reads GVLVGYGCGLVIGLSVIYIMW. Topologically, residues 834-863 are cytoplasmic; sequence STQYPAWFSRMDLKLEHIITTKMKKHKKRY.

It belongs to the RLP family. In terms of assembly, interacts with thioredoxin-like protein CITRX.

The protein localises to the cell membrane. Functionally, involved in plant defense. Confers resistance to the fungal pathogen C.fulvum through recognition of the AVR9 elicitor protein. This is Receptor-like protein Cf-9 from Solanum pimpinellifolium (Currant tomato).